The primary structure comprises 98 residues: UPF0235 protein Mmc1_3654 (98 aa).

The protein belongs to the UPF0235 family.

The sequence is that of UPF0235 protein Mmc1_3654 from Magnetococcus marinus (strain ATCC BAA-1437 / JCM 17883 / MC-1).